A 571-amino-acid chain; its full sequence is Proline--tRNA ligase (571 aa).

The protein belongs to the class-II aminoacyl-tRNA synthetase family. ProS type 1 subfamily. As to quaternary structure, homodimer.

It localises to the cytoplasm. It catalyses the reaction tRNA(Pro) + L-proline + ATP = L-prolyl-tRNA(Pro) + AMP + diphosphate. In terms of biological role, catalyzes the attachment of proline to tRNA(Pro) in a two-step reaction: proline is first activated by ATP to form Pro-AMP and then transferred to the acceptor end of tRNA(Pro). As ProRS can inadvertently accommodate and process non-cognate amino acids such as alanine and cysteine, to avoid such errors it has two additional distinct editing activities against alanine. One activity is designated as 'pretransfer' editing and involves the tRNA(Pro)-independent hydrolysis of activated Ala-AMP. The other activity is designated 'posttransfer' editing and involves deacylation of mischarged Ala-tRNA(Pro). The misacylated Cys-tRNA(Pro) is not edited by ProRS. The sequence is that of Proline--tRNA ligase from Thermodesulfovibrio yellowstonii (strain ATCC 51303 / DSM 11347 / YP87).